Consider the following 98-residue polypeptide: NADH-ubiquinone oxidoreductase chain 4L (98 aa).

A run of 3 helical transmembrane segments spans residues 1-21, 29-49, and 61-81; these read MSMV…GLLV, SLLC…MAIL, and IILL…LVMV.

The protein belongs to the complex I subunit 4L family. Core subunit of respiratory chain NADH dehydrogenase (Complex I) which is composed of 45 different subunits.

It is found in the mitochondrion inner membrane. It catalyses the reaction a ubiquinone + NADH + 5 H(+)(in) = a ubiquinol + NAD(+) + 4 H(+)(out). Core subunit of the mitochondrial membrane respiratory chain NADH dehydrogenase (Complex I) which catalyzes electron transfer from NADH through the respiratory chain, using ubiquinone as an electron acceptor. Part of the enzyme membrane arm which is embedded in the lipid bilayer and involved in proton translocation. This Lynx canadensis (Canada lynx) protein is NADH-ubiquinone oxidoreductase chain 4L (MT-ND4L).